The following is a 342-amino-acid chain: Protein RecA (342 aa).

65-72 (GPESSGKT) contributes to the ATP binding site.

Belongs to the RecA family.

The protein localises to the cytoplasm. Can catalyze the hydrolysis of ATP in the presence of single-stranded DNA, the ATP-dependent uptake of single-stranded DNA by duplex DNA, and the ATP-dependent hybridization of homologous single-stranded DNAs. It interacts with LexA causing its activation and leading to its autocatalytic cleavage. The sequence is that of Protein RecA from Caldanaerobacter subterraneus subsp. tengcongensis (strain DSM 15242 / JCM 11007 / NBRC 100824 / MB4) (Thermoanaerobacter tengcongensis).